Here is an 868-residue protein sequence, read N- to C-terminus: Monofunctional pimaradiene synthase (868 aa).

Mg(2+) is bound by residues Asp620, Asp624, Asn764, Thr768, and Glu772.

The protein belongs to the terpene synthase family. Tpsd subfamily. Mg(2+) is required as a cofactor.

The enzyme catalyses (+)-copalyl diphosphate = (-)-pimara-8(14),15-diene + diphosphate. It functions in the pathway terpene metabolism; oleoresin biosynthesis. Its function is as follows. Involved in defensive oleoresin formation in conifers in response to insect attack or other injury. Involved in diterpene (C20) olefins biosynthesis. Monofunctional enzyme lacking the DXDD motif in the class II active site relevant for the cyclization of geranylgeranyl diphosphate (GGPP). Requires (+)-copalyl diphosphate ((+)-CPP) as substrate, but no activity with GGPP or ent-CPP. Pimaradiene is the major products of the enzyme. This is Monofunctional pimaradiene synthase from Pinus contorta (Shore pine).